Consider the following 122-residue polypeptide: Autophagy-related protein 8e (122 aa).

Gly118 carries the Phosphatidylethanolamine amidated glycine lipid modification. Positions 119 to 122 are cleaved as a propeptide — removed in mature form; it reads ASSI.

This sequence belongs to the ATG8 family. As to quaternary structure, interacts with ATG4. Interacts with SH3P2. Interacts with ATG1A and ATG11. Binds to ATG1A and ATG11 on autophagic vesicles. Post-translationally, the C-terminal 4 residues are removed by ATG4 to expose Gly-118 at the C-terminus. This Gly-118 forms then a thioester bond with the 'Cys-558' of ATG7 (E1-like activating enzyme) before being transferred to the 'Cys-258' of ATG3 (the specific E2 conjugating enzyme), in order to be finally amidated with phosphatidylethanolamine. This lipid modification anchors ATG8 to autophagosomes. In terms of tissue distribution, constitutively expressed.

It is found in the cytoplasmic vesicle. The protein localises to the autophagosome membrane. Its subcellular location is the vacuole membrane. The protein resides in the cytoplasm. It localises to the cytoskeleton. Its function is as follows. Ubiquitin-like modifier involved in autophagosomes formation. May mediate the delivery of the autophagosomes to the vacuole via the microtubule cytoskeleton. The sequence is that of Autophagy-related protein 8e (ATG8E) from Arabidopsis thaliana (Mouse-ear cress).